The following is a 455-amino-acid chain: Cysteine--tRNA ligase (455 aa).

Position 28 (Cys28) interacts with Zn(2+). Residues 30 to 40 (MTVYDYCHLGH) carry the 'HIGH' region motif. 3 residues coordinate Zn(2+): Cys209, His234, and Glu238. Positions 266–270 (KMSKS) match the 'KMSKS' region motif. Position 269 (Lys269) interacts with ATP.

The protein belongs to the class-I aminoacyl-tRNA synthetase family. As to quaternary structure, monomer. Zn(2+) is required as a cofactor.

The protein resides in the cytoplasm. It catalyses the reaction tRNA(Cys) + L-cysteine + ATP = L-cysteinyl-tRNA(Cys) + AMP + diphosphate. This is Cysteine--tRNA ligase from Methylobacillus flagellatus (strain ATCC 51484 / DSM 6875 / VKM B-1610 / KT).